The sequence spans 261 residues: UPF0246 protein PMI0005 (261 aa).

This sequence belongs to the UPF0246 family.

The sequence is that of UPF0246 protein PMI0005 from Proteus mirabilis (strain HI4320).